The primary structure comprises 628 residues: E3 SUMO-protein ligase PIAS3 (628 aa).

An interaction with CCAR2 region spans residues 1 to 200 (MAELGELKHM…QLRFCLCETS (200 aa)). Residues 11-45 (VMSFRVSELQVLLGFAGRNKSGRKHELLAKALHLL) enclose the SAP domain. The LXXLL motif motif lies at 19-23 (LQVLL). Glycyl lysine isopeptide (Lys-Gly) (interchain with G-Cter in SUMO2) cross-links involve residues K46, K56, K230, and K307. The 166-residue stretch at 115–280 (MHPPLPQPVH…SLSVYLVRQL (166 aa)) folds into the PINIT domain. The SP-RING-type zinc finger occupies 312-393 (PDSEVATTSL…FMEILNSCSD (82 aa)). Residues C343, H345, C366, and C369 each contribute to the Zn(2+) site. An SUMO1-binding region spans residues 450–460 (LTIESSSDEED). Glycyl lysine isopeptide (Lys-Gly) (interchain with G-Cter in SUMO2) cross-links involve residues K466 and K482. Residues 571–628 (GPLAPTLGSSHRSSTPAPPPGRVSSIVAPGSSLREGHGGPLPSGPSLTGCRSDVISLD) form a disordered region.

It belongs to the PIAS family. Monomer. Interacts with PLAG1 and ZFHX3. Interacts with STAT5A; the interaction occurs on stimulation by PRL. Binds SUMO1 and UBE2I. Interacts with AR, BCL11A, HMGA2, IRF1 and NCOA2. Interacts with MITF; the interaction inhibits the transcriptional activity of MITF. Interacts with STAT3; the interaction occurs on stimulation by IL6, CNTF or OSM and inhibits the DNA binding activity of STAT3. Interacts with GFI1; the interaction relieves the inhibitory effect of PIAS3 on STAT3-mediated transcriptional activity. Interacts with MTA1. Interacts with CCAR2 (via N-terminus). Interacts with TRIM8. Interacts with PRDM1. In terms of processing, sumoylated. In terms of tissue distribution, expressed in kidney, heart, spleen, brain and cerebellum; weak expression, if any, in liver and lung.

It localises to the cytoplasm. The protein localises to the nucleus. The protein resides in the nucleus speckle. It functions in the pathway protein modification; protein sumoylation. Its function is as follows. Functions as an E3-type small ubiquitin-like modifier (SUMO) ligase, stabilizing the interaction between UBE2I and the substrate, and as a SUMO-tethering factor. Plays a crucial role as a transcriptional coregulation in various cellular pathways, including the STAT pathway and the steroid hormone signaling pathway. Repressor of STAT3 signaling via inhibiting STAT3 DNA-binding and suppressing cell growth. Repressor of MITF transcriptional activity. Enhances the sumoylation of MTA1 and may participate in its paralog-selective sumoylation. Sumoylates CCAR2 which promotes its interaction with SIRT1. Diminishes the sumoylation of ZFHX3 by preventing the colocalization of ZFHX3 with SUMO1 in the nucleus. The chain is E3 SUMO-protein ligase PIAS3 (Pias3) from Mus musculus (Mouse).